Reading from the N-terminus, the 270-residue chain is uncharacterized protein (270 aa).

It to T.pallidum TP_0127, TP_0315 and TP_0618.

This is an uncharacterized protein from Treponema pallidum (strain Nichols).